The following is a 915-amino-acid chain: Protein translocase subunit SecA (915 aa).

ATP-binding positions include Gln87, 105 to 109 (GEGKT), and Asp516. The interval 854–915 (QKMQMRHEQL…KYKNCHGQLE (62 aa)) is disordered. Residues Cys899, Cys901, Cys910, and His911 each contribute to the Zn(2+) site.

Belongs to the SecA family. Monomer and homodimer. Part of the essential Sec protein translocation apparatus which comprises SecA, SecYEG and auxiliary proteins SecDF-YajC and YidC. Zn(2+) serves as cofactor.

It localises to the cell inner membrane. It is found in the cytoplasm. The enzyme catalyses ATP + H2O + cellular proteinSide 1 = ADP + phosphate + cellular proteinSide 2.. Functionally, part of the Sec protein translocase complex. Interacts with the SecYEG preprotein conducting channel. Has a central role in coupling the hydrolysis of ATP to the transfer of proteins into and across the cell membrane, serving both as a receptor for the preprotein-SecB complex and as an ATP-driven molecular motor driving the stepwise translocation of polypeptide chains across the membrane. In Cellvibrio japonicus (strain Ueda107) (Pseudomonas fluorescens subsp. cellulosa), this protein is Protein translocase subunit SecA.